Here is a 171-residue protein sequence, read N- to C-terminus: S-ribosylhomocysteine lyase (171 aa).

Residues His-54, His-58, and Cys-128 each coordinate Fe cation.

This sequence belongs to the LuxS family. Homodimer. Requires Fe cation as cofactor.

It catalyses the reaction S-(5-deoxy-D-ribos-5-yl)-L-homocysteine = (S)-4,5-dihydroxypentane-2,3-dione + L-homocysteine. In terms of biological role, involved in the synthesis of autoinducer 2 (AI-2) which is secreted by bacteria and is used to communicate both the cell density and the metabolic potential of the environment. The regulation of gene expression in response to changes in cell density is called quorum sensing. Catalyzes the transformation of S-ribosylhomocysteine (RHC) to homocysteine (HC) and 4,5-dihydroxy-2,3-pentadione (DPD). This chain is S-ribosylhomocysteine lyase, found in Salmonella arizonae (strain ATCC BAA-731 / CDC346-86 / RSK2980).